Consider the following 232-residue polypeptide: uncharacterized protein (232 aa).

It localises to the cytoplasm. The protein localises to the nucleus. This is an uncharacterized protein from Saccharomyces cerevisiae (strain ATCC 204508 / S288c) (Baker's yeast).